A 141-amino-acid chain; its full sequence is Auxin-responsive protein SAUR61 (141 aa).

This sequence belongs to the ARG7 family.

Its subcellular location is the cell membrane. Its function is as follows. May promote auxin-stimulated organ elongation, such as hypocotyls, stamen filaments and petals. This Arabidopsis thaliana (Mouse-ear cress) protein is Auxin-responsive protein SAUR61.